The primary structure comprises 436 residues: Platelet-activating factor acetylhydrolase (436 aa).

The N-terminal stretch at 1–21 (MAPPKLHTLFCLSGFLALVHP) is a signal peptide. N-linked (GlcNAc...) asparagine glycosylation is found at asparagine 76 and asparagine 200. Catalysis depends on serine 271, which acts as the Nucleophile. The active-site Charge relay system is the aspartate 294. N-linked (GlcNAc...) asparagine glycosylation is present at asparagine 324. Histidine 349 serves as the catalytic Charge relay system.

It belongs to the AB hydrolase superfamily. Lipase family. Post-translationally, N-glycosylated. In terms of tissue distribution, plasma.

It localises to the secreted. Its subcellular location is the extracellular space. The enzyme catalyses a 1-O-alkyl-2-acetyl-sn-glycero-3-phosphocholine + H2O = a 1-O-alkyl-sn-glycero-3-phosphocholine + acetate + H(+). It carries out the reaction 1-O-decyl-2-acetyl-sn-glycero-3-phosphocholine + H2O = 1-O-decyl-sn-glycero-3-phosphocholine + acetate + H(+). It catalyses the reaction 1-O-dodecyl-2-acetyl-sn-glycero-3-phosphocholine + H2O = 1-O-dodecyl-sn-glycero-3-phosphocholine + acetate + H(+). The catalysed reaction is 1-O-tetradecyl-2-acetyl-sn-glycero-3-phosphocholine + H2O = 1-O-tetradecyl-sn-glycero-3-phosphocholine + acetate + H(+). The enzyme catalyses 1-O-hexadecyl-2-acetyl-sn-glycero-3-phosphocholine + H2O = 1-O-hexadecyl-sn-glycero-3-phosphocholine + acetate + H(+). It carries out the reaction 1-O-octadecyl-2-acetyl-sn-glycero-3-phosphocholine + H2O = 1-O-octadecyl-sn-glycero-3-phosphocholine + acetate + H(+). It catalyses the reaction 1-hexadecanoyl-2-acetyl-sn-glycero-3-phosphocholine + H2O = 1-hexadecanoyl-sn-glycero-3-phosphocholine + acetate + H(+). The catalysed reaction is 1-hexadecanoyl-2-propionyl-sn-glycero-3-phosphocholine + H2O = propanoate + 1-hexadecanoyl-sn-glycero-3-phosphocholine + H(+). The enzyme catalyses 1-hexadecanoyl-2-butanoyl-sn-glycero-3-phosphocholine + H2O = butanoate + 1-hexadecanoyl-sn-glycero-3-phosphocholine + H(+). It carries out the reaction 1-hexadecanoyl-2-pentanoyl-sn-glycero-3-phosphocholine + H2O = pentanoate + 1-hexadecanoyl-sn-glycero-3-phosphocholine + H(+). It catalyses the reaction 1-hexadecanoyl-2-glutaroyl-sn-glycero-3-phosphocholine + H2O = glutarate + 1-hexadecanoyl-sn-glycero-3-phosphocholine + H(+). The catalysed reaction is 1-hexadecanoyl-2-(5-oxopentanoyl)-sn-glycero-3-phosphocholine + H2O = 5-oxopentanoate + 1-hexadecanoyl-sn-glycero-3-phosphocholine + H(+). The enzyme catalyses 1-hexadecanoyl-2-(9-oxononanoyl)-sn-glycero-3-phosphocholine + H2O = 9-oxononanoate + 1-hexadecanoyl-sn-glycero-3-phosphocholine + H(+). It carries out the reaction 1-hexadecanoyl-2-[9-hydroperoxy-(10E-octadecenoyl)]-sn-glycero-3-phosphocholine + H2O = 9-hydroperoxy-10E-octadecenoate + 1-hexadecanoyl-sn-glycero-3-phosphocholine + H(+). It catalyses the reaction 1-hexadecanoyl-2-(10-hydroperoxy-8E-octadecenoyl)-sn-glycero-3-phosphocholine + H2O = 10-hydroperoxy-(8E)-octadecenoate + 1-hexadecanoyl-sn-glycero-3-phosphocholine + H(+). In terms of biological role, lipoprotein-associated calcium-independent phospholipase A2 involved in phospholipid catabolism during inflammatory and oxidative stress response. At the lipid-aqueous interface, hydrolyzes the ester bond of fatty acyl group attached at sn-2 position of phospholipids (phospholipase A2 activity). Specifically targets phospholipids with a short-chain fatty acyl group at sn-2 position. Can hydrolyze phospholipids with long fatty acyl chains, only if they carry oxidized functional groups. Hydrolyzes and inactivates platelet-activating factor (PAF, 1-O-alkyl-2-acetyl-sn-glycero-3-phosphocholine), a potent pro-inflammatory signaling lipid that acts through PTAFR on various innate immune cells. Hydrolyzes oxidatively truncated phospholipids carrying an aldehyde group at omega position, preventing their accumulation in lipoprotein particles and uncontrolled pro-inflammatory effects. As part of high-density lipoprotein (HDL) particles, can hydrolyze phospholipids having long-chain fatty acyl hydroperoxides at sn-2 position and protect against potential accumulation of these oxylipins in the vascular wall. Catalyzes the release from membrane phospholipids of F2-isoprostanes, lipid biomarkers of cellular oxidative damage. This chain is Platelet-activating factor acetylhydrolase (PLA2G7), found in Cavia porcellus (Guinea pig).